A 100-amino-acid chain; its full sequence is Small ribosomal subunit protein uS14c (100 aa).

It belongs to the universal ribosomal protein uS14 family. As to quaternary structure, part of the 30S ribosomal subunit.

The protein localises to the plastid. The protein resides in the chloroplast. Its function is as follows. Binds 16S rRNA, required for the assembly of 30S particles. This is Small ribosomal subunit protein uS14c from Chlorella vulgaris (Green alga).